A 419-amino-acid chain; its full sequence is Pregnancy-specific beta-1-glycoprotein 1 (419 aa).

Positions 1 to 34 (MGTLSAPPCTQRIKWKGLLLTASLLNFWNLPTTA) are cleaved as a signal peptide. The Ig-like V-type domain maps to 35–144 (QVTIEAEPTK…TGRFTFTLHL (110 aa)). Asparagine 61, asparagine 104, asparagine 111, asparagine 199, asparagine 259, asparagine 268, and asparagine 303 each carry an N-linked (GlcNAc...) asparagine glycan. Ig-like C2-type domains are found at residues 149–234 (PSIS…VTLN), 240–327 (PKPY…VTLN), and 335–410 (PRIY…KSMT). Cysteine 169 and cysteine 217 are disulfide-bonded. 2 disulfides stabilise this stretch: cysteine 262–cysteine 310 and cysteine 354–cysteine 394.

Belongs to the immunoglobulin superfamily. CEA family.

The protein localises to the secreted. In Homo sapiens (Human), this protein is Pregnancy-specific beta-1-glycoprotein 1 (PSG1).